A 935-amino-acid polypeptide reads, in one-letter code: Probable mediator of RNA polymerase II transcription subunit 15c (935 aa).

The span at 1 to 13 (MEGNTNWKPNEQG) shows a compositional bias: polar residues. 5 disordered regions span residues 1–28 (MEGN…WRSQ), 170–190 (NLPT…VSSS), 495–526 (SSVQ…HQMQ), 548–611 (QQVS…PVPG), and 635–654 (SSSK…PPEP). Residues 511 to 526 (MQQQQPQQGNHQHQMQ) are compositionally biased toward low complexity. 2 stretches are compositionally biased toward polar residues: residues 548–577 (QQVS…SPQL) and 635–644 (SSSKLGTQET).

Belongs to the plant Mediator complex subunit 15 family. As to quaternary structure, component of the Mediator complex.

Its subcellular location is the nucleus. In terms of biological role, component of the Mediator complex, a coactivator involved in the regulated transcription of nearly all RNA polymerase II-dependent genes. Mediator functions as a bridge to convey information from gene-specific regulatory proteins to the basal RNA polymerase II transcription machinery. The Mediator complex, having a compact conformation in its free form, is recruited to promoters by direct interactions with regulatory proteins and serves for the assembly of a functional preinitiation complex with RNA polymerase II and the general transcription factors. The sequence is that of Probable mediator of RNA polymerase II transcription subunit 15c (MED15C) from Arabidopsis thaliana (Mouse-ear cress).